The following is a 638-amino-acid chain: 1-deoxy-D-xylulose-5-phosphate synthase (638 aa).

Thiamine diphosphate contacts are provided by residues His71 and 112-114 (SHA). Mg(2+) is bound at residue Asp144. Residues 145 to 146 (GA), Asn173, Tyr284, and Glu365 contribute to the thiamine diphosphate site. Asn173 lines the Mg(2+) pocket.

The protein belongs to the transketolase family. DXPS subfamily. In terms of assembly, homodimer. Mg(2+) is required as a cofactor. Thiamine diphosphate serves as cofactor.

The enzyme catalyses D-glyceraldehyde 3-phosphate + pyruvate + H(+) = 1-deoxy-D-xylulose 5-phosphate + CO2. It participates in metabolic intermediate biosynthesis; 1-deoxy-D-xylulose 5-phosphate biosynthesis; 1-deoxy-D-xylulose 5-phosphate from D-glyceraldehyde 3-phosphate and pyruvate: step 1/1. Catalyzes the acyloin condensation reaction between C atoms 2 and 3 of pyruvate and glyceraldehyde 3-phosphate to yield 1-deoxy-D-xylulose-5-phosphate (DXP). This Mycobacterium sp. (strain JLS) protein is 1-deoxy-D-xylulose-5-phosphate synthase.